Here is a 941-residue protein sequence, read N- to C-terminus: RNA-binding protein 4F (941 aa).

The segment covering 1 to 13 has biased composition (basic and acidic residues); that stretch reads MDADKQLERQLEK. The disordered stretch occupies residues 1–149; sequence MDADKQLERQ…DSDNAGGGNQ (149 aa). A compositionally biased stretch (acidic residues) spans 14 to 32; the sequence is ELDEMPAEDLDDDAYDEYD. Over residues 42-52 the composition is skewed to polar residues; that stretch reads GSPQQGHSESP. Phosphoserine is present on Ser43. Residues 55 to 65 are compositionally biased toward basic and acidic residues; it reads EEEHKSEELRQ. The span at 87-98 shows a compositional bias: acidic residues; sequence SSDDEPSVEETE. Low complexity predominate over residues 111 to 134; that stretch reads DSSSSSDDVGVIEGSELESNSEVS. Phosphoserine is present on Ser153. The disordered stretch occupies residues 629 to 713; sequence RSRIKPNSQS…GPANAEAKES (85 aa). Positions 671-680 are enriched in low complexity; it reads EQQQQQQQQQ. At Ser713 the chain carries Phosphoserine. Tyr717 is subject to Phosphotyrosine. Residue Ser718 is modified to Phosphoserine. The RRM domain maps to 724–801; the sequence is NKIFVRNLHP…MNISVAISNP (78 aa). Composition is skewed to basic and acidic residues over residues 862–902, 913–922, and 930–941; these read EANG…KGDD, QKGDEKKEEE, and SNDDFRKLFLKD. The segment at 862-941 is disordered; that stretch reads EANGEEQKGD…DDFRKLFLKD (80 aa).

It is found in the cytoplasm. In terms of biological role, may be involved in gene regulation during development. Binds RNA. The protein is RNA-binding protein 4F of Drosophila melanogaster (Fruit fly).